The chain runs to 199 residues: NAD(P)H dehydrogenase (quinone) (199 aa).

Positions 4 to 190 constitute a Flavodoxin-like domain; it reads VLVLYYSTYG…DGARFLGQHV (187 aa). FMN contacts are provided by residues 10 to 15 and 78 to 80; these read STYGHI and TRF. Tyrosine 12 serves as a coordination point for NAD(+). Tryptophan 98 provides a ligand contact to substrate. FMN is bound by residues 113–119 and histidine 134; that span reads STATQHG.

Belongs to the WrbA family. The cofactor is FMN.

The catalysed reaction is a quinone + NADH + H(+) = a quinol + NAD(+). It carries out the reaction a quinone + NADPH + H(+) = a quinol + NADP(+). The polypeptide is NAD(P)H dehydrogenase (quinone) (Gluconacetobacter diazotrophicus (strain ATCC 49037 / DSM 5601 / CCUG 37298 / CIP 103539 / LMG 7603 / PAl5)).